Reading from the N-terminus, the 46-residue chain is Diuretic hormone class 1 (46 aa).

An Isoleucine amide modification is found at Ile-46.

The protein localises to the secreted. In terms of biological role, regulation of fluid secretion. Stimulates primary urine secretion by Malpighian tubules and causes a dose-dependent stimulation of cAMP levels in the tubules. Has a greater effect on the transport of Na(+) then K(+) ions. In vitro, has synergistic effects with the smaller diuretic hormone DH(31) which co-occurs with it. The polypeptide is Diuretic hormone class 1 (Diploptera punctata (Pacific beetle cockroach)).